Reading from the N-terminus, the 214-residue chain is Ribosomal RNA small subunit methyltransferase G (214 aa).

Residues Gly-72, Phe-77, 125–126, and Arg-141 each bind S-adenosyl-L-methionine; that span reads VE.

It belongs to the methyltransferase superfamily. RNA methyltransferase RsmG family.

It is found in the cytoplasm. The enzyme catalyses guanosine(527) in 16S rRNA + S-adenosyl-L-methionine = N(7)-methylguanosine(527) in 16S rRNA + S-adenosyl-L-homocysteine. Specifically methylates the N7 position of guanine in position 527 of 16S rRNA. The polypeptide is Ribosomal RNA small subunit methyltransferase G (Sinorhizobium fredii (strain NBRC 101917 / NGR234)).